Consider the following 86-residue polypeptide: MANIKSQKKRILTNEKARLRNNAVKSELRTAIRAVNTAVESADKDAAATALVSASRKLDKAVSKGVLHKNNAANRKSAISKKVNAL.

This sequence belongs to the bacterial ribosomal protein bS20 family.

Its function is as follows. Binds directly to 16S ribosomal RNA. The sequence is that of Small ribosomal subunit protein bS20 from Pseudarthrobacter chlorophenolicus (strain ATCC 700700 / DSM 12829 / CIP 107037 / JCM 12360 / KCTC 9906 / NCIMB 13794 / A6) (Arthrobacter chlorophenolicus).